The following is a 300-amino-acid chain: Fructose-bisphosphate aldolase class 1 (300 aa).

Catalysis depends on E181, which acts as the Proton acceptor. K218 (schiff-base intermediate with dihydroxyacetone-P) is an active-site residue.

It belongs to the class I fructose-bisphosphate aldolase family.

The catalysed reaction is beta-D-fructose 1,6-bisphosphate = D-glyceraldehyde 3-phosphate + dihydroxyacetone phosphate. It functions in the pathway carbohydrate degradation; glycolysis; D-glyceraldehyde 3-phosphate and glycerone phosphate from D-glucose: step 4/4. This is Fructose-bisphosphate aldolase class 1 (fda) from Synechocystis sp. (strain ATCC 27184 / PCC 6803 / Kazusa).